A 775-amino-acid chain; its full sequence is Acetamidase regulatory protein (775 aa).

A compositionally biased stretch (polar residues) spans 1–15 (MSSTAHNSQPSTGNG). Positions 1 to 20 (MSSTAHNSQPSTGNGVTKRK) are disordered. Positions 26-59 (CIHCHRRKVRCDARIVGLPCSNCRSAGKADCRIH) form a DNA-binding region, zn(2)-C6 fungal-type. The span at 126 to 153 (PHSSYTNGNHLSNNRGSQPITETQTFTR) shows a compositional bias: polar residues. Disordered regions lie at residues 126–159 (PHSS…GADR) and 630–699 (ATSE…HQNQ). Positions 630–644 (ATSERPRRFSTHDQN) are enriched in basic and acidic residues. Positions 674-689 (PRPPYEVPTPESPRMP) are enriched in pro residues.

The protein localises to the nucleus. Positively regulates the expression of genes involved in the catabolism of certain amides, omega amino acids, and lactams. This chain is Acetamidase regulatory protein (amdR), found in Aspergillus oryzae (strain ATCC 42149 / RIB 40) (Yellow koji mold).